Here is a 204-residue protein sequence, read N- to C-terminus: N-(5'-phosphoribosyl)anthranilate isomerase (204 aa).

Belongs to the TrpF family.

The enzyme catalyses N-(5-phospho-beta-D-ribosyl)anthranilate = 1-(2-carboxyphenylamino)-1-deoxy-D-ribulose 5-phosphate. It functions in the pathway amino-acid biosynthesis; L-tryptophan biosynthesis; L-tryptophan from chorismate: step 3/5. This Bacillus cereus (strain Q1) protein is N-(5'-phosphoribosyl)anthranilate isomerase.